We begin with the raw amino-acid sequence, 592 residues long: MRSHYCGDVNKSHVGQEVTLVGWVNRSRDLGGVVFLDLRDREGLIQVVYDPDLPEVFNVASTLRAEFCVQVKGLVRARPDSQVNGQMKTGEIEVLGQALTIINAADPLPLSMDNYQNNSEEQRLKYRYLDLRRPEMAQRLIFRAKVTSSVRRFLDSNGFLDIETPILTKATPEGARDYLVPSRTYKGQFFALPQSPQLFKQLLMMSGFDRYYQIVKCFRDEDLRADRQPEFTQIDIETSFMSSEQVMAKTEEMMRGLFLEMLNVDLGEFPRMTYNEAMRRFGSDKPDLRNPLELVDIADLLKEVEFAVFSGPANDEEGRVAALRIPGGAALSRKQIDDYTKFVGIYGAKGLAWMKINDLSLGLEGIQSPVLKFLNESIVNEIVSRTAAQTGDIILFGADQATVVAESMGALRLKAGEDFNLLQGEWRPLWVVDFPMFEKINGNFHAVHHPFTAPRGVTAAELEANPANRVSDAYDMVLNGCELGGGSVRIHNQEMQSAVFRILGITDEEAKEKFGFLLEALRYGTPPHAGLAFGLDRIIMLMTGASSIRDVMAFPKTTTAACPLTNAPGFANPQQLAELGIAVVEKAVKTED.

L-aspartate is bound at residue Glu173. The tract at residues 197–200 (QLFK) is aspartate. Arg219 lines the L-aspartate pocket. Residues 219 to 221 (RDE) and Gln228 each bind ATP. L-aspartate is bound at residue His448. An ATP-binding site is contributed by Glu482. Arg489 lines the L-aspartate pocket. Residue 534–537 (GLDR) coordinates ATP.

This sequence belongs to the class-II aminoacyl-tRNA synthetase family. Type 1 subfamily. Homodimer.

Its subcellular location is the cytoplasm. The enzyme catalyses tRNA(Asp) + L-aspartate + ATP = L-aspartyl-tRNA(Asp) + AMP + diphosphate. Catalyzes the attachment of L-aspartate to tRNA(Asp) in a two-step reaction: L-aspartate is first activated by ATP to form Asp-AMP and then transferred to the acceptor end of tRNA(Asp). This chain is Aspartate--tRNA ligase, found in Shewanella baltica (strain OS195).